Here is a 493-residue protein sequence, read N- to C-terminus: Kelch-like protein 42 (493 aa).

The BTB domain maps to 5 to 77 (EMVQIRLEDR…INAGGAREGW (73 aa)). 6 Kelch repeats span residues 183–241 (VLVA…ILDN), 242–289 (YLFI…AVNS), 291–332 (LYAI…ECKG), 334–379 (IYVI…SVEE), 381–436 (IYIV…ALHN), and 438–487 (GIYI…SLYL).

Component of the BCR(KLHL42) E3 ubiquitin ligase complex, at least composed of CUL3 and KLHL42. Interacts (via the BTB domain) with CUL3. Interacts (via the kelch domains) with KATNA1.

It localises to the cytoplasm. It is found in the cytoskeleton. The protein resides in the spindle. It participates in protein modification; protein ubiquitination. Functionally, substrate-specific adapter of a BCR (BTB-CUL3-RBX1) E3 ubiquitin-protein ligase complex required for mitotic progression and cytokinesis. The BCR(KLHL42) E3 ubiquitin ligase complex mediates the ubiquitination and subsequent degradation of KATNA1. Involved in microtubule dynamics throughout mitosis. The chain is Kelch-like protein 42 (Klhl42) from Mus musculus (Mouse).